Consider the following 662-residue polypeptide: DNA ligase (662 aa).

NAD(+) is bound by residues 31–35 (DKDYD) and 79–80 (SL). Lys121 serves as the catalytic N6-AMP-lysine intermediate. Residues Arg143, Glu177, and Lys313 each coordinate NAD(+). Residues Cys406, Cys409, Cys422, and Cys428 each contribute to the Zn(2+) site. Positions 586–662 (VLESPFMGKT…LSEEEFENMI (77 aa)) constitute a BRCT domain.

This sequence belongs to the NAD-dependent DNA ligase family. LigA subfamily. The cofactor is Mg(2+). Mn(2+) is required as a cofactor.

It catalyses the reaction NAD(+) + (deoxyribonucleotide)n-3'-hydroxyl + 5'-phospho-(deoxyribonucleotide)m = (deoxyribonucleotide)n+m + AMP + beta-nicotinamide D-nucleotide.. In terms of biological role, DNA ligase that catalyzes the formation of phosphodiester linkages between 5'-phosphoryl and 3'-hydroxyl groups in double-stranded DNA using NAD as a coenzyme and as the energy source for the reaction. It is essential for DNA replication and repair of damaged DNA. The protein is DNA ligase of Clostridium perfringens (strain ATCC 13124 / DSM 756 / JCM 1290 / NCIMB 6125 / NCTC 8237 / Type A).